The sequence spans 212 residues: uncharacterized protein (212 aa).

The signal sequence occupies residues 1-20 (MRRVLLCFLTLILLLPAASA).

This is an uncharacterized protein from Archaeoglobus fulgidus (strain ATCC 49558 / DSM 4304 / JCM 9628 / NBRC 100126 / VC-16).